Here is a 130-residue protein sequence, read N- to C-terminus: Small ribosomal subunit protein uS8 (130 aa).

It belongs to the universal ribosomal protein uS8 family. In terms of assembly, part of the 30S ribosomal subunit. Contacts proteins S5 and S12.

Functionally, one of the primary rRNA binding proteins, it binds directly to 16S rRNA central domain where it helps coordinate assembly of the platform of the 30S subunit. The chain is Small ribosomal subunit protein uS8 from Pseudomonas putida (strain ATCC 700007 / DSM 6899 / JCM 31910 / BCRC 17059 / LMG 24140 / F1).